The following is a 429-amino-acid chain: Adenylosuccinate synthetase (429 aa).

Residues 12 to 18 (GDEGKGK) and 40 to 42 (GHT) each bind GTP. Aspartate 13 (proton acceptor) is an active-site residue. Aspartate 13 and glycine 40 together coordinate Mg(2+). IMP is bound by residues 13 to 16 (DEGK), 38 to 41 (NAGH), threonine 129, arginine 143, glutamine 223, threonine 238, and arginine 302. Residue histidine 41 is the Proton donor of the active site. 298 to 304 (TVTGRKR) is a binding site for substrate. Residues arginine 304, 330 to 332 (KLD), and 412 to 414 (STS) each bind GTP.

The protein belongs to the adenylosuccinate synthetase family. Homodimer. It depends on Mg(2+) as a cofactor.

It is found in the cytoplasm. It catalyses the reaction IMP + L-aspartate + GTP = N(6)-(1,2-dicarboxyethyl)-AMP + GDP + phosphate + 2 H(+). Its pathway is purine metabolism; AMP biosynthesis via de novo pathway; AMP from IMP: step 1/2. Plays an important role in the de novo pathway of purine nucleotide biosynthesis. Catalyzes the first committed step in the biosynthesis of AMP from IMP. The chain is Adenylosuccinate synthetase from Novosphingobium aromaticivorans (strain ATCC 700278 / DSM 12444 / CCUG 56034 / CIP 105152 / NBRC 16084 / F199).